Consider the following 65-residue polypeptide: Beta-toxin Am IT (65 aa).

Glutamate 1 carries the post-translational modification Pyrrolidone carboxylic acid (Glu); partial. The region spanning 1–64 (EHGYLLDKYT…LWNYKTNKCK (64 aa)) is the LCN-type CS-alpha/beta domain. Cystine bridges form between cysteine 12-cysteine 63, cysteine 16-cysteine 38, cysteine 23-cysteine 45, and cysteine 27-cysteine 47. At serine 65 the chain carries Serine amide.

It belongs to the long (4 C-C) scorpion toxin superfamily. Sodium channel inhibitor family. As to expression, expressed by the venom gland.

The protein localises to the secreted. Functionally, has a toxic effect on insects and mammals. On German cockroach larvae, it provokes contraction, paralysis and lethality. Intracerebroventricular injection into mice causes severe neurotoxic symptoms. It fully competes with the binding of the iodinated Css4 (AC P60266) on rat brain synaptosomes, with moderate affinity and in a concentration-dependent manner (EC(50)=25 nM). It may act on both site 3 and site 4 of voltage-gated sodium channels. In Androctonus mauritanicus mauritanicus (Scorpion), this protein is Beta-toxin Am IT.